A 514-amino-acid polypeptide reads, in one-letter code: MKEYQIHLELDRSQQHNFLYPLLFREYIYTLAHDHGLNRSTIPLENGGYDNKSSSLSVKRLISRTYQRIHLSIYAKDSNPNQFIGHNNQFYSQMISEGFSVIVEIPFSLRLVAFLEGKEKEMAKSHNFQSIHSIFPFFENNFSHLHYVLDVLIPYPIRPEILVRAFRYWVKDASSLHLLRFFLHEYFNWNSLITPKKSNSIFSTSNPRFFLFLYNSHVYEYESIFFFLRNQSSHLRSTSSGLLFERISFYGKVEDLVQVFVNDFQDNLWLFKHPIMHYVRYQGKSVLASKDMPLLMNKWKYYLVNLWQWHFHVWSQPGRIHINHLYKDYINFLGYLSRGRLNTLVVRSQMLENAFLIDNAMKQFETTVPIIPLIGSLTMARFCNSLGHPISKPTWADSSDSYIIDRFMRICRKLSHYHSGSSKKKSLYRIKYILRVSCVKSLVRKHKSTVRVFLKRLGSEFLEEFFTEEEHVLSLIFPRALFTSRRLYRGRVWYLDIICINDFVNHDKFEIVPN.

Belongs to the intron maturase 2 family. MatK subfamily.

It localises to the plastid. The protein localises to the chloroplast. Functionally, usually encoded in the trnK tRNA gene intron. Probably assists in splicing its own and other chloroplast group II introns. This is Maturase K from Acer palmatum (Japanese maple).